The chain runs to 131 residues: Olfactory receptor-like protein COR9 (131 aa).

Topologically, residues 1 to 16 (VAICSPLLYSTVMTKR) are cytoplasmic. A helical membrane pass occupies residues 17–41 (VCMQLVVGSYMGGLLNSLTHTCGLL). Residues 42–82 (GLPFCGPNVINHYFCDIPPLLQLACSDTHRNETLLLAFSAV) are Extracellular-facing. N-linked (GlcNAc...) asparagine glycosylation is present at asparagine 72. Residues 83–103 (IALFTLFVITASYMLILSVIL) traverse the membrane as a helical segment. Over 104–116 (KIQSDDGRKKTFH) the chain is Cytoplasmic. The chain crosses the membrane as a helical span at residues 117-131 (TCASHLTAITIFFGS).

This sequence belongs to the G-protein coupled receptor 1 family.

It is found in the cell membrane. Its function is as follows. Odorant receptor. The polypeptide is Olfactory receptor-like protein COR9 (COR9) (Gallus gallus (Chicken)).